Here is a 1193-residue protein sequence, read N- to C-terminus: MAGHDVQYGKHRTRRSFSRIKEVLGLPNLIEIQTDSFKEFLDTGLKEVFEDVLPISNFTDTMELEFVGYELKEPKYTLEEARIHDASYSAPIFVTFRLINKETGEIKTQEVFFGDFPIMTEMGTFIINGGERIIVSQLVRSPGVYFNDKVDKNGKVGYGSTVIPNRGAWLELETDSKDIAYTRIDRTRKIPFTTLVRALGFSGDDEIVDIFGDSELVRNTIEKDIHKNPADSRTDEALKEIYERLRPGEPKTADSSRSLLVARFFDPRRYDLAAVGRYKLNKKLNIKTRLLGQTIAENLVDPETGEILVEAGTEMTRDVIDSIAEHLDGDLNKFVYTPNDYAVVTEPVVLQKFKVVAPNDPDRVVTIVGNANPDDKVRALTTADILAEMSYFLNLAEGIGKVDDIDHLGNRRVRAVGELLANQFRIGLARMERNVRERMSVQDNEALTPQQIINIRPVTAAVKEFFGSSQLSQFMDQHNPLSELSHKRRLSALGPGGLTRDRAGYEVRDVHYTHYGRMCPIETPEGPNIGLINNLSTYGRLNKYGFIQTPYRKVDRATGKVTNEVVWLTADEEDEYIVAQANSKLNEDGTFAEEIVMGRHQGVNQEYPSHLVDFVDVSPKQVVAVATACIPFLENDDSNRALMGANMQRQAVPLIDPKAPFVGTGMEYQAAHDSGAAVIAKHDGKVVYSDADKVEVRREDGSLDVYTIQKFRRSNSGTAYNQRTLVKVGDIVEKGDFIADGPSMEGGEMALGQNPIVAYMTWEGYNFEDAVIMSERLVKDDVYTSVHLEEFESETRDTKLGPEEITRELPNVSEEALKNLDEMGIIRIGAEVKEGDILVGKVTPKGEKDLSAEERLLHAIFGDKSREVRDTSLRVPHGGDGVVRDVKIFTRANGDELQSGVNMLVRVYIAQKRKIKVGDKMAGRHGNKGVVSRIVPVEDMPYLPDGTPVDIMLNPLGVPSRMNIGQVMELHLGMAARNLGIYIATPVFDGASSEDLWDTVREAGMDSDAKTILYDGRTGEPFDNRVSVGVMYMIKLHHMVDDKLHARSVGPYSLVTQQPLGGKAQFGGQRFGEMEVWALEAYGASNILQEILTYKSDDVNGRLKAYEAITKGKPIPKPGVPESFRVLVKELQSLGLDMRVLDEDDYEVELRDLDEGEDDDVMHVDDLEKARVQQAKEAAELEKAKEEALDKTE.

The disordered stretch occupies residues 1173-1193 (QQAKEAAELEKAKEEALDKTE). Residues 1177–1193 (EAAELEKAKEEALDKTE) show a composition bias toward basic and acidic residues.

Belongs to the RNA polymerase beta chain family. As to quaternary structure, the RNAP catalytic core consists of 2 alpha, 1 beta, 1 beta' and 1 omega subunit. When a sigma factor is associated with the core the holoenzyme is formed, which can initiate transcription.

It carries out the reaction RNA(n) + a ribonucleoside 5'-triphosphate = RNA(n+1) + diphosphate. Functionally, DNA-dependent RNA polymerase catalyzes the transcription of DNA into RNA using the four ribonucleoside triphosphates as substrates. This chain is DNA-directed RNA polymerase subunit beta, found in Streptococcus thermophilus (strain CNRZ 1066).